We begin with the raw amino-acid sequence, 763 residues long: ATP-dependent RNA helicase glh-1 (763 aa).

A disordered region spans residues 1–30 (MSDGWSDSESAAKAKTGFGSGGGFGGGNNG). Residues 18 to 30 (FGSGGGFGGGNNG) show a composition bias toward gly residues. A run of 7 repeats spans residues 24-33 (FGGGNNGGSG), 34-43 (FGGGKNGGTG), 44-53 (FGGGNTGGSG), 54-63 (FGGGNTGGSG), 64-73 (FGGGKTGGSG), 74-83 (FGGGNTCGSG), and 84-93 (FGGGSTGGSP). A 7 X 10 AA tandem repeats, Gly-rich region spans residues 24-93 (FGGGNNGGSG…FGGGSTGGSP (70 aa)). 2 CCHC-type zinc fingers span residues 158 to 175 (NNCF…DCPE) and 183 to 200 (RVCY…ECTE). The segment at 193-230 (HTSRECTEERKPREGRTGGFGGGAGFGNNGGNDGFGGD) is disordered. A compositionally biased stretch (basic and acidic residues) spans 194 to 208 (TSRECTEERKPREGR). Gly residues predominate over residues 209 to 230 (TGGFGGGAGFGNNGGNDGFGGD). CCHC-type zinc fingers lie at residues 242-259 (MKCF…ECPE) and 262-279 (RGCF…ECPN). Residues 341–369 (KTFAEANLTETMQKNVAHAGYSKTTPIQQ) carry the Q motif motif. One can recognise a Helicase ATP-binding domain in the interval 372–556 (LPLVHQGYDI…RAFLRENYVM (185 aa)). ATP is bound at residue 385 to 392 (AQTGSGKT). Residues 423-427 (ILTPT) carry the Phosphodegron motif. The short motif at 499-502 (DEAD) is the DEAD box element. Residues 592 to 739 (DIDSYTTEKS…IVPDWMQGAA (148 aa)) form the Helicase C-terminal domain.

This sequence belongs to the DEAD box helicase family. DDX4/VASA subfamily. Interacts with csn-5; this may prevent glh-1 degradation induced by kgb-1. Interacts with zyx-1. Interacts (via the N-terminal region containing the four CCHC zinc fingers) with pan-1. Interacts with kgb-1; this may promote glh-1 degradation by the proteasome. In terms of processing, phosphorylated by kgb-1 (in vitro); this may be responsible for its degradation by the proteasome.

It is found in the cytoplasm. The protein localises to the cytoplasmic granule. The protein resides in the perinuclear region. It catalyses the reaction ATP + H2O = ADP + phosphate + H(+). In terms of biological role, probable ATP-binding RNA helicase. May act redundantly with the P-granule component glh-4 to regulate the formation of the granular structure of P-granules in embryos. Plays a role in positively regulating the localization of pgl-1 to P-granules. May play a role in transgenerational epigenetic inheritance. May protect somatic cells from excessive apoptosis during normal development. This chain is ATP-dependent RNA helicase glh-1, found in Caenorhabditis elegans.